The chain runs to 399 residues: MIQLIGIKSQCDIGIRQKFSITSEVLEGKLKYINELVGSVLILSTCNRTEIYVDSNLEEKKLIDTVFYGLDWDYDLVSYIFYIKDKYAIKHLMEVSCGFHSKILGEDQILGQIKTAYDAALEAKTIKGKLQRLFQKAITCGKEFKHICESYRIPVSIPSIVAKEILNMDIRKYMIIGFGKIGQLLFKYLNNSQAQIIYIAVRDLNKVHDSYKKCGKIRFISFKDRKSYYNDIDCIVSCTSAPDKIISKGDLPCRKLTIFDLAVPEDIDRNVLDLDNVTLYDIDNISVIDEKNKAIRKKTMGKYRYILENHIDKFIKWEKLHQLSPEIQKVKKYGDEICEKRITTFKNKKHTKDNDILVKTMIESTARFYINRAIEVMKEEKLNGREEECLRLINKIFCK.

Substrate-binding positions include Thr-45–Arg-48, Ser-101, Glu-106–Gln-108, and Gln-112. Catalysis depends on Cys-46, which acts as the Nucleophile. Position 177 to 182 (Gly-177 to Gly-182) interacts with NADP(+).

This sequence belongs to the glutamyl-tRNA reductase family. Homodimer.

It carries out the reaction (S)-4-amino-5-oxopentanoate + tRNA(Glu) + NADP(+) = L-glutamyl-tRNA(Glu) + NADPH + H(+). The protein operates within porphyrin-containing compound metabolism; protoporphyrin-IX biosynthesis; 5-aminolevulinate from L-glutamyl-tRNA(Glu): step 1/2. Its function is as follows. Catalyzes the NADPH-dependent reduction of glutamyl-tRNA(Glu) to glutamate 1-semialdehyde (GSA). This is Glutamyl-tRNA reductase from Clostridium kluyveri (strain ATCC 8527 / DSM 555 / NBRC 12016 / NCIMB 10680 / K1).